Consider the following 130-residue polypeptide: Small ribosomal subunit protein uS9 (130 aa).

The protein belongs to the universal ribosomal protein uS9 family.

This chain is Small ribosomal subunit protein uS9, found in Neisseria gonorrhoeae (strain ATCC 700825 / FA 1090).